A 305-amino-acid polypeptide reads, in one-letter code: Probable aspartoacylase (305 aa).

Residues His-13 and Glu-16 each contribute to the Zn(2+) site. Substrate contacts are provided by residues Arg-55 and 62 to 63 (NR). Position 105 (His-105) interacts with Zn(2+). Glu-163 and Tyr-273 together coordinate substrate.

The protein belongs to the AspA/AstE family. Aspartoacylase subfamily. Zn(2+) is required as a cofactor.

It catalyses the reaction an N-acyl-L-aspartate + H2O = a carboxylate + L-aspartate. The polypeptide is Probable aspartoacylase (Prochlorococcus marinus (strain NATL2A)).